Reading from the N-terminus, the 300-residue chain is Ribosomal RNA small subunit methyltransferase H (300 aa).

S-adenosyl-L-methionine-binding positions include 33–35 (GGH), Asp-52, Phe-79, Asp-100, and Gln-107.

It belongs to the methyltransferase superfamily. RsmH family.

Its subcellular location is the cytoplasm. It carries out the reaction cytidine(1402) in 16S rRNA + S-adenosyl-L-methionine = N(4)-methylcytidine(1402) in 16S rRNA + S-adenosyl-L-homocysteine + H(+). Functionally, specifically methylates the N4 position of cytidine in position 1402 (C1402) of 16S rRNA. This Mycoplasmopsis agalactiae (strain NCTC 10123 / CIP 59.7 / PG2) (Mycoplasma agalactiae) protein is Ribosomal RNA small subunit methyltransferase H.